The sequence spans 72 residues: Translation initiation factor IF-1 (72 aa).

Residues 1-72 (MAKDDVIEID…DKGRITFRYK (72 aa)) form the S1-like domain.

Belongs to the IF-1 family. Component of the 30S ribosomal translation pre-initiation complex which assembles on the 30S ribosome in the order IF-2 and IF-3, IF-1 and N-formylmethionyl-tRNA(fMet); mRNA recruitment can occur at any time during PIC assembly.

Its subcellular location is the cytoplasm. Functionally, one of the essential components for the initiation of protein synthesis. Stabilizes the binding of IF-2 and IF-3 on the 30S subunit to which N-formylmethionyl-tRNA(fMet) subsequently binds. Helps modulate mRNA selection, yielding the 30S pre-initiation complex (PIC). Upon addition of the 50S ribosomal subunit IF-1, IF-2 and IF-3 are released leaving the mature 70S translation initiation complex. In Campylobacter jejuni subsp. doylei (strain ATCC BAA-1458 / RM4099 / 269.97), this protein is Translation initiation factor IF-1.